The primary structure comprises 39 residues: Photosystem II reaction center protein X (39 aa).

Residues Ser-11–Ser-31 form a helical membrane-spanning segment.

It belongs to the PsbX family. Type 1 subfamily. PSII is composed of 1 copy each of membrane proteins PsbA, PsbB, PsbC, PsbD, PsbE, PsbF, PsbH, PsbI, PsbJ, PsbK, PsbL, PsbM, PsbT, PsbX, PsbY, PsbZ, Psb30/Ycf12, at least 3 peripheral proteins of the oxygen-evolving complex and a large number of cofactors. It forms dimeric complexes.

It is found in the plastid. The protein localises to the cyanelle thylakoid membrane. Involved in the binding and/or turnover of quinones at the Q(B) site of photosystem II (PSII). PSII is a light-driven water plastoquinone oxidoreductase, using light energy to abstract electrons from H(2)O, generating a proton gradient subsequently used for ATP formation. This is Photosystem II reaction center protein X from Cyanophora paradoxa.